The primary structure comprises 332 residues: Holliday junction branch migration complex subunit RuvB (332 aa).

The interval 1-181 (MSRILDNEIM…FGITGHMEYY (181 aa)) is large ATPase domain (RuvB-L). ATP contacts are provided by residues Leu-20, Arg-21, Gly-62, Lys-65, Thr-66, Thr-67, 128-130 (EDF), Arg-171, Tyr-181, and Arg-218. Thr-66 serves as a coordination point for Mg(2+). The tract at residues 182 to 252 (AHAGLTEIVE…ITDKALTMLD (71 aa)) is small ATPAse domain (RuvB-S). A head domain (RuvB-H) region spans residues 255 to 332 (HEGLDYVDQK…EHLGYEYSEK (78 aa)). Arg-291, Arg-310, Arg-312, and Arg-315 together coordinate DNA.

It belongs to the RuvB family. In terms of assembly, homohexamer. Forms an RuvA(8)-RuvB(12)-Holliday junction (HJ) complex. HJ DNA is sandwiched between 2 RuvA tetramers; dsDNA enters through RuvA and exits via RuvB. An RuvB hexamer assembles on each DNA strand where it exits the tetramer. Each RuvB hexamer is contacted by two RuvA subunits (via domain III) on 2 adjacent RuvB subunits; this complex drives branch migration. In the full resolvosome a probable DNA-RuvA(4)-RuvB(12)-RuvC(2) complex forms which resolves the HJ.

It localises to the cytoplasm. It carries out the reaction ATP + H2O = ADP + phosphate + H(+). The RuvA-RuvB-RuvC complex processes Holliday junction (HJ) DNA during genetic recombination and DNA repair, while the RuvA-RuvB complex plays an important role in the rescue of blocked DNA replication forks via replication fork reversal (RFR). RuvA specifically binds to HJ cruciform DNA, conferring on it an open structure. The RuvB hexamer acts as an ATP-dependent pump, pulling dsDNA into and through the RuvAB complex. RuvB forms 2 homohexamers on either side of HJ DNA bound by 1 or 2 RuvA tetramers; 4 subunits per hexamer contact DNA at a time. Coordinated motions by a converter formed by DNA-disengaged RuvB subunits stimulates ATP hydrolysis and nucleotide exchange. Immobilization of the converter enables RuvB to convert the ATP-contained energy into a lever motion, pulling 2 nucleotides of DNA out of the RuvA tetramer per ATP hydrolyzed, thus driving DNA branch migration. The RuvB motors rotate together with the DNA substrate, which together with the progressing nucleotide cycle form the mechanistic basis for DNA recombination by continuous HJ branch migration. Branch migration allows RuvC to scan DNA until it finds its consensus sequence, where it cleaves and resolves cruciform DNA. In Streptococcus pneumoniae (strain JJA), this protein is Holliday junction branch migration complex subunit RuvB.